The following is a 685-amino-acid chain: MAARAAGSGGWEVVKRSRRPGASSGGRGGGGDRRALGEANGVWKYDLSSPIQPTSTLYERGFEKIMKRQNKEQVPPPAAESKKPVNKKQPKKVTAVASQNQKQGPFRSLEDALKALDVAALQKELDKSQSVFTGNPSVWLKDLASYLNYKLQTPRMEPTLSQYPHDYPYSLVSRELRGIIRGLLTKAAGSVELFFDHCLFTMLQELDKTPGESLHGYRICIQAILQDKPKIVTSNLDKFLELLRSHQSRPAKCLTIMWALGQAGFTNLTEGLKVWLGIMLPVLGIKSLSPFAIAYLDRLLLMYPNLTKGFGMIGPKDFFPLLDFAYMPNNSLSPSLQEQLCQLFPRLKVLAFGAKPESSLHTYFPSFLSRATPSCPAAMKKELLASLTQCLTVDPLSTSVWRQLYPKHLSQSSLLLEHLLTSWEQIPKKARKCLQETIQSFTLTNQELLKKGSGSNEHVVTCDTACKGLLQQARGPRPPWARLLLLLLVFAVGFLCHDLRSHSSFQASLTGRLLQSSGLLPVAQQVCAKLYSYSLQSYNWLQETLPACGSYLLAVVQPSLQLAWTYIYATFSFLSAYCASYLAFFSDSLAGVLQRVQLPEALHQLFHSLKELLLLFYHSVLLPMWHLLLAALAQVQEHCHEACRGEMTWDCIKTQFSTAAHWTWLCLQDVTVAFLDWALTMISQQ.

Disordered stretches follow at residues 1 to 36 (MAAR…RRAL) and 66 to 104 (MKRQ…QKQG). An N-acetylalanine modification is found at A2. N267 and N305 each carry an N-linked (GlcNAc...) asparagine glycan. Transmembrane regions (helical) follow at residues 479–499 (PWAR…CHDL) and 612–632 (LLLL…LAAL).

The protein belongs to the TMEM214 family. As to quaternary structure, constitutively interacts with CASP4; required for the localization of procaspase 4 to the ER.

It is found in the endoplasmic reticulum membrane. In terms of biological role, critical mediator, in cooperation with CASP4, of endoplasmic reticulum-stress induced apoptosis. Required or the activation of CASP4 following endoplasmic reticulum stress. The protein is Transmembrane protein 214 (Tmem214) of Rattus norvegicus (Rat).